Consider the following 179-residue polypeptide: Ubiquitin-conjugating enzyme E2 C (179 aa).

Positions 1–31 (MASQNRDPAATSVAAARKGAEPSGGAARGPV) are disordered. Position 2 is an N-acetylalanine (Ala2). Residue Ser3 is modified to Phosphoserine. Positions 30–175 (PVGKRLQQEL…LQETYSKQVT (146 aa)) constitute a UBC core domain. Catalysis depends on Cys114, which acts as the Glycyl thioester intermediate.

It belongs to the ubiquitin-conjugating enzyme family. Component of the APC/C complex, composed of at least 14 distinct subunits that assemble into a complex of at least 19 chains with a combined molecular mass of around 1.2 MDa. Within this complex, directly interacts with ANAPC2. Autoubiquitinated by the APC/C complex, leading to its degradation by the proteasome. Its degradation plays a central role in APC/C regulation, allowing cyclin-A accumulation before S phase entry. APC/C substrates inhibit the autoubiquitination of UBE2C/UBCH10 but not its E2 function, hence APC/C remaining active until its substrates have been destroyed.

The catalysed reaction is S-ubiquitinyl-[E1 ubiquitin-activating enzyme]-L-cysteine + [E2 ubiquitin-conjugating enzyme]-L-cysteine = [E1 ubiquitin-activating enzyme]-L-cysteine + S-ubiquitinyl-[E2 ubiquitin-conjugating enzyme]-L-cysteine.. It catalyses the reaction S-ubiquitinyl-[E1 ubiquitin-activating enzyme]-L-cysteine + [acceptor protein]-L-lysine = [E1 ubiquitin-activating enzyme]-L-cysteine + N(6)-monoubiquitinyl-[acceptor protein]-L-lysine.. It functions in the pathway protein modification; protein ubiquitination. Accepts ubiquitin from the E1 complex and catalyzes its covalent attachment to other proteins. In vitro catalyzes 'Lys-11'- and 'Lys-48'-linked polyubiquitination. Acts as an essential factor of the anaphase promoting complex/cyclosome (APC/C), a cell cycle-regulated ubiquitin ligase that controls progression through mitosis. Acts by initiating 'Lys-11'-linked polyubiquitin chains on APC/C substrates, leading to the degradation of APC/C substrates by the proteasome and promoting mitotic exit. The polypeptide is Ubiquitin-conjugating enzyme E2 C (UBE2C) (Homo sapiens (Human)).